The primary structure comprises 179 residues: Large ribosomal subunit protein uL16 (179 aa).

Positions 147–179 (KASSASLANLDEDANSQTDDETSSSGSVATVES) are disordered. The span at 156 to 168 (LDEDANSQTDDET) shows a compositional bias: acidic residues. Polar residues predominate over residues 169 to 179 (SSSGSVATVES).

Belongs to the universal ribosomal protein uL16 family. As to quaternary structure, part of the 50S ribosomal subunit.

In terms of biological role, binds 23S rRNA and is also seen to make contacts with the A and possibly P site tRNAs. The polypeptide is Large ribosomal subunit protein uL16 (Prochlorococcus marinus (strain MIT 9211)).